The sequence spans 39 residues: Cytochrome b559 subunit beta (39 aa).

The helical transmembrane segment at 14-30 (WLTVHGLAVPTVSFLGS) threads the bilayer. Position 18 (H18) interacts with heme.

Belongs to the PsbE/PsbF family. As to quaternary structure, heterodimer of an alpha subunit and a beta subunit. PSII is composed of 1 copy each of membrane proteins PsbA, PsbB, PsbC, PsbD, PsbE, PsbF, PsbH, PsbI, PsbJ, PsbK, PsbL, PsbM, PsbT, PsbX, PsbY, PsbZ, Psb30/Ycf12, at least 3 peripheral proteins of the oxygen-evolving complex and a large number of cofactors. It forms dimeric complexes. Heme b is required as a cofactor.

It localises to the plastid. The protein localises to the chloroplast thylakoid membrane. Functionally, this b-type cytochrome is tightly associated with the reaction center of photosystem II (PSII). PSII is a light-driven water:plastoquinone oxidoreductase that uses light energy to abstract electrons from H(2)O, generating O(2) and a proton gradient subsequently used for ATP formation. It consists of a core antenna complex that captures photons, and an electron transfer chain that converts photonic excitation into a charge separation. The polypeptide is Cytochrome b559 subunit beta (Lactuca sativa (Garden lettuce)).